The following is a 94-amino-acid chain: MTKSELIAQLAERFPQLVAKDADFAVKMILDAMSEALVRGDRIEIRGFGSFALNYRPPRVGRNPKSGEKVSVPAKWVPHFKAGKELRERVDQAI.

Belongs to the bacterial histone-like protein family. Heterodimer of an alpha and a beta chain.

This protein is one of the two subunits of integration host factor, a specific DNA-binding protein that functions in genetic recombination as well as in transcriptional and translational control. This chain is Integration host factor subunit beta, found in Dechloromonas aromatica (strain RCB).